The following is a 464-amino-acid chain: tRNA modification GTPase MnmE (464 aa).

Residues arginine 29, glutamate 91, and arginine 131 each contribute to the (6S)-5-formyl-5,6,7,8-tetrahydrofolate site. Residues glycine 226 to glycine 387 enclose the TrmE-type G domain. K(+) is bound at residue asparagine 236. Residues asparagine 236–serine 241, threonine 255–threonine 261, and aspartate 280–glycine 283 each bind GTP. Serine 240 provides a ligand contact to Mg(2+). Positions 255, 257, and 260 each coordinate K(+). Threonine 261 provides a ligand contact to Mg(2+). Lysine 464 serves as a coordination point for (6S)-5-formyl-5,6,7,8-tetrahydrofolate.

This sequence belongs to the TRAFAC class TrmE-Era-EngA-EngB-Septin-like GTPase superfamily. TrmE GTPase family. Homodimer. Heterotetramer of two MnmE and two MnmG subunits. K(+) is required as a cofactor.

Its subcellular location is the cytoplasm. Its function is as follows. Exhibits a very high intrinsic GTPase hydrolysis rate. Involved in the addition of a carboxymethylaminomethyl (cmnm) group at the wobble position (U34) of certain tRNAs, forming tRNA-cmnm(5)s(2)U34. This Prochlorococcus marinus (strain NATL2A) protein is tRNA modification GTPase MnmE.